The sequence spans 286 residues: ATP synthase gamma chain (286 aa).

This sequence belongs to the ATPase gamma chain family. In terms of assembly, F-type ATPases have 2 components, CF(1) - the catalytic core - and CF(0) - the membrane proton channel. CF(1) has five subunits: alpha(3), beta(3), gamma(1), delta(1), epsilon(1). CF(0) has three main subunits: a, b and c.

Its subcellular location is the cell inner membrane. Its function is as follows. Produces ATP from ADP in the presence of a proton gradient across the membrane. The gamma chain is believed to be important in regulating ATPase activity and the flow of protons through the CF(0) complex. The chain is ATP synthase gamma chain from Alcanivorax borkumensis (strain ATCC 700651 / DSM 11573 / NCIMB 13689 / SK2).